We begin with the raw amino-acid sequence, 311 residues long: MFHHISVMLNETIDYLNVKENGVYIDCTLGGAGHALYLLNQLNDDGRLIAIDQDQTAIDNAKEVLKDHLHKVTFVHSNFRELTQILKDLNIEKVDGIYYDLGVSSPQLDIPERGFSYHHDATLDMRMDQTQELTAYEIVNNWSYEALVKIFYRYGEEKFSKQIARRIEAHREQQPITTTLELVDIIKEGIPAKARRKGGHPAKRVFQALRIAVNDELSAFEDSIEQAIELVKVDGRISVITFHSLEDRLCKQVFQEYEKGPEVPRGLPVIPEAYTPKLKRVNRKPITATEEDLDDNNRARSAKLRVAEILK.

Residues 32–34 (AGH), Asp52, Phe79, Asp100, and Gln107 each bind S-adenosyl-L-methionine.

This sequence belongs to the methyltransferase superfamily. RsmH family.

The protein resides in the cytoplasm. It carries out the reaction cytidine(1402) in 16S rRNA + S-adenosyl-L-methionine = N(4)-methylcytidine(1402) in 16S rRNA + S-adenosyl-L-homocysteine + H(+). In terms of biological role, specifically methylates the N4 position of cytidine in position 1402 (C1402) of 16S rRNA. This chain is Ribosomal RNA small subunit methyltransferase H, found in Staphylococcus aureus (strain Mu3 / ATCC 700698).